The primary structure comprises 363 residues: Chorismate synthase (363 aa).

Residues Arg48 and Arg54 each contribute to the NADP(+) site. FMN-binding positions include 125–127, 237–238, Gly277, 292–296, and Arg318; these read RSS, NA, and KPTSS.

The protein belongs to the chorismate synthase family. As to quaternary structure, homotetramer. FMNH2 serves as cofactor.

It carries out the reaction 5-O-(1-carboxyvinyl)-3-phosphoshikimate = chorismate + phosphate. It functions in the pathway metabolic intermediate biosynthesis; chorismate biosynthesis; chorismate from D-erythrose 4-phosphate and phosphoenolpyruvate: step 7/7. Functionally, catalyzes the anti-1,4-elimination of the C-3 phosphate and the C-6 proR hydrogen from 5-enolpyruvylshikimate-3-phosphate (EPSP) to yield chorismate, which is the branch point compound that serves as the starting substrate for the three terminal pathways of aromatic amino acid biosynthesis. This reaction introduces a second double bond into the aromatic ring system. This is Chorismate synthase from Pseudomonas fluorescens (strain Pf0-1).